Reading from the N-terminus, the 327-residue chain is 4-hydroxythreonine-4-phosphate dehydrogenase (327 aa).

Substrate-binding residues include H134 and T135. Positions 164, 209, and 264 each coordinate a divalent metal cation. 3 residues coordinate substrate: K272, N281, and R290.

This sequence belongs to the PdxA family. Homodimer. Zn(2+) is required as a cofactor. It depends on Mg(2+) as a cofactor. The cofactor is Co(2+).

The protein localises to the cytoplasm. It catalyses the reaction 4-(phosphooxy)-L-threonine + NAD(+) = 3-amino-2-oxopropyl phosphate + CO2 + NADH. The protein operates within cofactor biosynthesis; pyridoxine 5'-phosphate biosynthesis; pyridoxine 5'-phosphate from D-erythrose 4-phosphate: step 4/5. Catalyzes the NAD(P)-dependent oxidation of 4-(phosphooxy)-L-threonine (HTP) into 2-amino-3-oxo-4-(phosphooxy)butyric acid which spontaneously decarboxylates to form 3-amino-2-oxopropyl phosphate (AHAP). In Shewanella frigidimarina (strain NCIMB 400), this protein is 4-hydroxythreonine-4-phosphate dehydrogenase.